Reading from the N-terminus, the 147-residue chain is Hemoglobin subunit beta (147 aa).

Positions 3–147 (HWSCEEKQFI…VAHALALGYH (145 aa)) constitute a Globin domain. The heme b site is built by His64 and His93.

The protein belongs to the globin family. Heterotetramer of two alpha-D chains and two beta chains. Red blood cells.

Its function is as follows. Involved in oxygen transport from the lung to the various peripheral tissues. This Chelonoidis carbonarius (Red-footed tortoise) protein is Hemoglobin subunit beta (HBB).